Here is a 64-residue protein sequence, read N- to C-terminus: Small ribosomal subunit protein eS17 (64 aa).

Belongs to the eukaryotic ribosomal protein eS17 family.

In Methanosarcina barkeri (strain Fusaro / DSM 804), this protein is Small ribosomal subunit protein eS17.